The primary structure comprises 177 residues: MTKYSTELKIEIVSKYLNHEDSIKGLAKQYNIHWTLIRRWVDKAKCQGLAALSVKHTKTTYSSDFKLNVVRYYLTHSIGVSKVAAKFNISDSQVYNWAKKFNEEGYAGLLPKQKGRPRKVPKKSKKTTKKLELSEKQKYEEKILKQEAELERLRVENLVLKKVAARYPRYPTNKKHN.

Positions 112–131 (KQKGRPRKVPKKSKKTTKKL) are disordered. The segment covering 113 to 128 (QKGRPRKVPKKSKKTT) has biased composition (basic residues).

The protein belongs to the IS150/IS1296 orfA family.

This Lactobacillus johnsonii protein is Insertion element IS1223 uncharacterized 20.7 kDa protein.